The following is a 61-amino-acid chain: Small ribosomal subunit protein uS14 (61 aa).

Zn(2+) contacts are provided by Cys-24, Cys-27, Cys-40, and Cys-43.

This sequence belongs to the universal ribosomal protein uS14 family. Zinc-binding uS14 subfamily. Part of the 30S ribosomal subunit. Contacts proteins S3 and S10. It depends on Zn(2+) as a cofactor.

Functionally, binds 16S rRNA, required for the assembly of 30S particles and may also be responsible for determining the conformation of the 16S rRNA at the A site. This chain is Small ribosomal subunit protein uS14, found in Frankia casuarinae (strain DSM 45818 / CECT 9043 / HFP020203 / CcI3).